Reading from the N-terminus, the 109-residue chain is Short-chain dehydrogenase/reductase homolog YusS (109 aa).

The protein belongs to the short-chain dehydrogenases/reductases (SDR) family.

This Bacillus subtilis (strain 168) protein is Short-chain dehydrogenase/reductase homolog YusS (yusS).